Reading from the N-terminus, the 491-residue chain is FAD-dependent monooxygenase cle3 (491 aa).

Residues E55, G69, R128, D330, and A343 each coordinate FAD. N380 carries N-linked (GlcNAc...) asparagine glycosylation. Residues 462 to 482 (STVVWTSLGILGLVVFLFLLF) form a helical membrane-spanning segment.

It belongs to the paxM FAD-dependent monooxygenase family. FAD is required as a cofactor.

The protein resides in the membrane. It functions in the pathway secondary metabolite biosynthesis; terpenoid biosynthesis. In terms of biological role, FAD-dependent monooxygenase; part of the cluster A that mediates the biosynthesis of chevalone E and its oxidized derivatives that possess a unique five-membered lactone ring and can synergistically enhance the cytotoxicity of doxorubicin (DOX) in breast cancer cells. Within the pathway, cle3 takes part to the biosynthesis of the molecular scaffold by catalyzing the formation of an (S)-epoxide ring at the terminal olefin of the geranylgeranyl group. The molecular scaffold is commonly biosynthesized by a series of enzymes including the non-reducing polyketide synthase (NR-PKS) cle1 that produces the alpha-pyrone triacetic acid lactone (TAL); The membrane-bound prenyltransferase cle5 that accepts TAL as its substrate to perform a C-3 geranylgeranylation reaction, in which the pathway-dedicated GGPS cle6 is required to provide GGPP, the other substrate of cle5; the FAD-dependent monooxygenase Cle3 that forms an (S)-epoxide ring at the terminal olefin of the geranylgeranyl group; and the terpene cyclase Cle7 that catalyzes the cyclization of the prenyl group that yields the pentacyclic pathway intermediate chevalone E. Chevalone E can derivatize into seven new oxidized analogs by the cytochrome P450 monooxygenases cle2 (acting at C-20) and cle4 (acting at C-11 and C-12). The sequence is that of FAD-dependent monooxygenase cle3 from Aspergillus versicolor.